The chain runs to 353 residues: MITVKPGSVVFENVRKTFGAFTAIPDLSLTIEPGTLVTLLGPSGCGKTTTLRMLAGLEHPNSGRILIGGKDVTMLPANERDVSMVFQSYALFPHMSALDNVAYGLQSSGLKKAEAREKAEEGLKLVGLAGMGHRLPAELSGGQQQRVAVARALVLEPQVLLLDEPLSNLDARLRRRVRTDIRELQQRIGFTAVYVTHDQDEALAVSDRIIVMKEGEIAQSGAPRELYEAPASSFIADFMGEANVVPCEVVSQTGDESLVRVGTMEHRVRSRGPRSGSAKLAVRPGAITIGAAGGSGMPGRVLHTAYLGGHIEYEVETEVGTLFIIDHEMNHTQRETSDVTLNFKNRGIALIDA.

An ABC transporter domain is found at valine 9–methionine 239. Glycine 41–threonine 48 is an ATP binding site.

It belongs to the ABC transporter superfamily. Fe(3+) ion importer (TC 3.A.1.10) family. As to quaternary structure, the complex is composed of two ATP-binding proteins (FbpC), two transmembrane proteins (FbpB) and a solute-binding protein (FbpA).

Its subcellular location is the cell inner membrane. It carries out the reaction Fe(3+)(out) + ATP + H2O = Fe(3+)(in) + ADP + phosphate + H(+). In terms of biological role, part of the ABC transporter complex FbpABC involved in Fe(3+) ions import. Responsible for energy coupling to the transport system. In Agrobacterium fabrum (strain C58 / ATCC 33970) (Agrobacterium tumefaciens (strain C58)), this protein is Fe(3+) ions import ATP-binding protein FbpC.